A 465-amino-acid chain; its full sequence is Cysteine--tRNA ligase (465 aa).

C27 is a Zn(2+) binding site. The 'HIGH' region motif lies at 29-39; that stretch reads PTTYNYIHIGN. The Zn(2+) site is built by C207, H232, and E236. The 'KMSKS' region signature appears at 264–268; sequence KMSKS. Residue K267 coordinates ATP.

Belongs to the class-I aminoacyl-tRNA synthetase family. Monomer. Zn(2+) is required as a cofactor.

Its subcellular location is the cytoplasm. The catalysed reaction is tRNA(Cys) + L-cysteine + ATP = L-cysteinyl-tRNA(Cys) + AMP + diphosphate. The chain is Cysteine--tRNA ligase from Carboxydothermus hydrogenoformans (strain ATCC BAA-161 / DSM 6008 / Z-2901).